Reading from the N-terminus, the 309-residue chain is tRNA pseudouridine synthase B (309 aa).

Aspartate 52 functions as the Nucleophile in the catalytic mechanism.

This sequence belongs to the pseudouridine synthase TruB family. Type 1 subfamily.

It catalyses the reaction uridine(55) in tRNA = pseudouridine(55) in tRNA. In terms of biological role, responsible for synthesis of pseudouridine from uracil-55 in the psi GC loop of transfer RNAs. The polypeptide is tRNA pseudouridine synthase B (Leptospira interrogans serogroup Icterohaemorrhagiae serovar copenhageni (strain Fiocruz L1-130)).